The following is a 328-amino-acid chain: tRNA uridine(34) hydroxylase (328 aa).

The Rhodanese domain occupies 122–218 (QENRCLVLDV…YGLKMGTGKW (97 aa)). The active-site Cysteine persulfide intermediate is the C178.

This sequence belongs to the TrhO family.

It carries out the reaction uridine(34) in tRNA + AH2 + O2 = 5-hydroxyuridine(34) in tRNA + A + H2O. Catalyzes oxygen-dependent 5-hydroxyuridine (ho5U) modification at position 34 in tRNAs. The chain is tRNA uridine(34) hydroxylase from Chlamydia muridarum (strain MoPn / Nigg).